The chain runs to 272 residues: MKVIMTTKVDKASMNIMQKLIENFGFKETELKFDGNPVYKKDDMVILTTNDEMIYYDYLDREIEKQLSFKPEIIAFASRHSSKQKLPALTTHVTGNWGEAMYGGKDESFAIAIPSAMKLALLKMNELNDLGWTVCYEATHHGPSELEVPSFFIEIGSSEEEWVNDRAGEIIAETIVYVLDNYENSKFKVALGIGGGHYAPKQTKRALNSDLAFGHILPKYAQPVSRDVILKAINRFHEKVEAIYVDWKGSKGETRQLAKSLAQELGLEFIKD.

As to quaternary structure, monomer. Zn(2+) is required as a cofactor.

The enzyme catalyses a D-aminoacyl-tRNA + H2O = a tRNA + a D-alpha-amino acid + H(+). The catalysed reaction is glycyl-tRNA(Ala) + H2O = tRNA(Ala) + glycine + H(+). It catalyses the reaction D-tyrosyl-tRNA(Tyr) + H2O = D-tyrosine + tRNA(Tyr). In terms of biological role, D-aminoacyl-tRNA deacylase with broad substrate specificity. By recycling D-aminoacyl-tRNA to D-amino acids and free tRNA molecules, this enzyme counteracts the toxicity associated with the formation of D-aminoacyl-tRNA entities in vivo. Catalyzes the hydrolysis of D-tyrosyl-tRNA(Tyr) and D-aspartyl-tRNA(Asp). This is D-aminoacyl-tRNA deacylase from Pyrococcus abyssi (strain GE5 / Orsay).